Here is a 202-residue protein sequence, read N- to C-terminus: Imidazoleglycerol-phosphate dehydratase (202 aa).

Belongs to the imidazoleglycerol-phosphate dehydratase family.

The protein localises to the cytoplasm. It carries out the reaction D-erythro-1-(imidazol-4-yl)glycerol 3-phosphate = 3-(imidazol-4-yl)-2-oxopropyl phosphate + H2O. It functions in the pathway amino-acid biosynthesis; L-histidine biosynthesis; L-histidine from 5-phospho-alpha-D-ribose 1-diphosphate: step 6/9. The chain is Imidazoleglycerol-phosphate dehydratase from Parasynechococcus marenigrum (strain WH8102).